The sequence spans 131 residues: Transcription antitermination protein NusB (131 aa).

The protein belongs to the NusB family.

In terms of biological role, involved in transcription antitermination. Required for transcription of ribosomal RNA (rRNA) genes. Binds specifically to the boxA antiterminator sequence of the ribosomal RNA (rrn) operons. In Bacillus pumilus (strain SAFR-032), this protein is Transcription antitermination protein NusB.